Reading from the N-terminus, the 257-residue chain is Large ribosomal subunit protein uL2 (257 aa).

The segment at 207–231 is disordered; that stretch reads VEHPFGGGNHQHIGKPSTIRRDAPA.

It belongs to the universal ribosomal protein uL2 family. Component of the large ribosomal subunit.

Its subcellular location is the cytoplasm. Its function is as follows. Component of the large ribosomal subunit. The ribosome is a large ribonucleoprotein complex responsible for the synthesis of proteins in the cell. The protein is Large ribosomal subunit protein uL2 (rpl8) of Xenopus laevis (African clawed frog).